Reading from the N-terminus, the 219-residue chain is Histidinol-phosphate aminotransferase (219 aa).

The protein belongs to the class-II pyridoxal-phosphate-dependent aminotransferase family. Histidinol-phosphate aminotransferase subfamily. As to quaternary structure, homodimer. Pyridoxal 5'-phosphate is required as a cofactor.

The catalysed reaction is L-histidinol phosphate + 2-oxoglutarate = 3-(imidazol-4-yl)-2-oxopropyl phosphate + L-glutamate. It functions in the pathway amino-acid biosynthesis; L-histidine biosynthesis; L-histidine from 5-phospho-alpha-D-ribose 1-diphosphate: step 7/9. In Mycolicibacterium smegmatis (Mycobacterium smegmatis), this protein is Histidinol-phosphate aminotransferase (hisC).